A 122-amino-acid chain; its full sequence is UPF0102 protein RHECIAT_CH0000358 (122 aa).

This sequence belongs to the UPF0102 family.

The protein is UPF0102 protein RHECIAT_CH0000358 of Rhizobium etli (strain CIAT 652).